The following is a 368-amino-acid chain: L-lactate oxidase (368 aa).

Residues 13-368 (VNAIDVLDLA…KQMKVKTTFA (356 aa)) form the FMN hydroxy acid dehydrogenase domain. Position 39 (Tyr39) interacts with pyruvate. FMN contacts are provided by residues 92–94 (PIA), Ser121, and Gln143. A pyruvate-binding site is contributed by Tyr145. Thr171 is a binding site for FMN. Position 180 (Arg180) interacts with pyruvate. FMN is bound by residues Lys239 and Ser261. Pyruvate contacts are provided by His263 and Arg266. Residue His263 is the Proton acceptor of the active site. Residues 294–298 (DGGVQ) and Arg318 contribute to the FMN site.

It belongs to the FMN-dependent alpha-hydroxy acid dehydrogenase family. As to quaternary structure, homotetramer. The cofactor is FMN.

It catalyses the reaction (S)-lactate + O2 = pyruvate + H2O2. The enzyme catalyses 2-hydroxyoctanoate + O2 = 2-oxooctanoate + H2O2. Catalyzes the oxidation of (S)-lactate (L-lactate) to pyruvate, with a reduction of O2 to H2O2. To a lesser extent is also able to use 2-hydroxyoctanoate as substrate. May be involved in the utilization of L-lactate as an energy source for growth. The polypeptide is L-lactate oxidase (Lacticaseibacillus rhamnosus (strain LMS2-1)).